The sequence spans 268 residues: 3-deoxy-manno-octulosonate cytidylyltransferase (268 aa).

Belongs to the KdsB family.

The protein resides in the cytoplasm. It catalyses the reaction 3-deoxy-alpha-D-manno-oct-2-ulosonate + CTP = CMP-3-deoxy-beta-D-manno-octulosonate + diphosphate. It participates in nucleotide-sugar biosynthesis; CMP-3-deoxy-D-manno-octulosonate biosynthesis; CMP-3-deoxy-D-manno-octulosonate from 3-deoxy-D-manno-octulosonate and CTP: step 1/1. Its pathway is bacterial outer membrane biogenesis; lipopolysaccharide biosynthesis. Activates KDO (a required 8-carbon sugar) for incorporation into bacterial lipopolysaccharide in Gram-negative bacteria. This chain is 3-deoxy-manno-octulosonate cytidylyltransferase, found in Ralstonia nicotianae (strain ATCC BAA-1114 / GMI1000) (Ralstonia solanacearum).